We begin with the raw amino-acid sequence, 504 residues long: Anaerobic nitric oxide reductase transcription regulator NorR (504 aa).

Asp-57 carries the post-translational modification 4-aspartylphosphate. The Sigma-54 factor interaction domain occupies 187 to 416 (MIGLSPGMTQ…LEHAIHRAVV (230 aa)). ATP-binding positions include 215 to 222 (GETGTGKE) and 278 to 287 (ADNGTLFLDE). A DNA-binding region (H-T-H motif) is located at residues 479–498 (WAACARMLETDVANLHRLAK).

It functions in the pathway nitrogen metabolism; nitric oxide reduction. Required for the expression of anaerobic nitric oxide (NO) reductase, acts as a transcriptional activator for at least the norVW operon. Activation also requires sigma-54. This is Anaerobic nitric oxide reductase transcription regulator NorR from Escherichia coli (strain ATCC 8739 / DSM 1576 / NBRC 3972 / NCIMB 8545 / WDCM 00012 / Crooks).